We begin with the raw amino-acid sequence, 2774 residues long: Teneurin-2 (2774 aa).

The Teneurin N-terminal domain occupies 1–375 (MDVKDRRHRS…KPSKYCSWKC (375 aa)). Residues 1–379 (MDVKDRRHRS…YCSWKCAALS (379 aa)) are Cytoplasmic-facing. A phosphoserine mark is found at serine 90 and serine 124. The interval 111–271 (TGSDADSDTE…HHHSSANSLN (161 aa)) is disordered. Over residues 141–155 (SSGLSSRENSALTLT) the composition is skewed to polar residues. Threonine 155 is subject to Phosphothreonine. At serine 157 the chain carries Phosphoserine. Over residues 159 to 168 (NENKSDDDNG) the composition is skewed to basic and acidic residues. The span at 174–188 (TSSSSLLPSAQLPSS) shows a compositional bias: low complexity. The span at 202-211 (DSNTSHQIMD) shows a compositional bias: polar residues. Residues 229–240 (SGPQQASSSGPP) show a composition bias toward low complexity. Residues 380–400 (AIAAALLLAILLAYFIAMHLL) form a helical membrane-spanning segment. At 401-2774 (GLNWQLQPAD…FLRQNEMGKR (2374 aa)) the chain is on the extracellular side. 2 N-linked (GlcNAc...) asparagine glycosylation sites follow: asparagine 443 and asparagine 482. EGF-like domains follow at residues 575–603 (DCPR…ADCA), 605–634 (AACP…AECD), 636–668 (PMNQ…EHCE), 669–701 (EVDC…NCEL), 702–735 (ARVQ…PDCS), 738–766 (VCSV…AACD), 769–797 (VCHP…EHCT), and 808–841 (DGCP…PGCN). 22 cysteine pairs are disulfide-bonded: cysteine 576–cysteine 586, cysteine 580–cysteine 591, cysteine 593–cysteine 602, cysteine 611–cysteine 622, cysteine 624–cysteine 633, cysteine 640–cysteine 651, cysteine 645–cysteine 656, cysteine 658–cysteine 667, cysteine 672–cysteine 683, cysteine 677–cysteine 688, cysteine 690–cysteine 699, cysteine 710–cysteine 723, cysteine 725–cysteine 734, cysteine 739–cysteine 749, cysteine 743–cysteine 754, cysteine 756–cysteine 765, cysteine 770–cysteine 780, cysteine 774–cysteine 785, cysteine 787–cysteine 796, cysteine 810–cysteine 820, cysteine 814–cysteine 829, and cysteine 831–cysteine 840. 3 N-linked (GlcNAc...) asparagine glycosylation sites follow: asparagine 925, asparagine 948, and asparagine 1267. 5 NHL repeats span residues 1272 to 1316 (LELR…VKSL), 1342 to 1386 (ARCG…NGII), 1401 to 1452 (LSCD…IAGR), 1474 to 1501 (LESA…INRL), and 1530 to 1573 (CYSG…VSKN). Residues 1583 to 1602 (YEAASPGEQELYVFNADGIH) form a YD 1 repeat. Asparagine 1616 carries N-linked (GlcNAc...) asparagine glycosylation. YD repeat units lie at residues 1619 to 1639 (YSAD…LKIR), 1682 to 1701 (YDGN…WTTF), and 1702 to 1724 (YDYD…TSLH). Asparagine 1712, asparagine 1749, asparagine 1773, asparagine 1807, and asparagine 1892 each carry an N-linked (GlcNAc...) asparagine glycan. YD repeat units lie at residues 1895–1914 (YFFN…ERTD), 1936–1954 (YLDK…YIFE), 1955–1975 (YDSS…HSMS), 1982–1999 (YIRN…VIFD), 2000–2021 (YSDD…VFYK), 2022–2039 (YGKL…TAVT), 2042–2062 (YDET…FSCT), 2065–2085 (YRKV…EGMI), 2093–2113 (YHDN…TPLP), 2119–2136 (YDEI…GVIY), 2137–2163 (YDIN…IKEV), 2165–2178 (YEMF…MTVQ), 2179–2202 (YDSM…TKYT), 2205–2225 (YDGD…WRYS), 2226–2246 (YDLN…LMPL), 2248–2268 (YDLR…DDDG), 2280–2300 (YNSK…SVQY), and 2302–2322 (YDGV…LQYF). N-linked (GlcNAc...) asparagine glycosylation is present at asparagine 1993. Residue asparagine 2197 is glycosylated (N-linked (GlcNAc...) asparagine). Asparagine 2337 is a glycosylation site (N-linked (GlcNAc...) asparagine). The stretch at 2348–2389 (YDLQGHLFAMESSSGEEYYVASDNTGTPLAVFSINGLMIKQL) is one YD 23 repeat. A glycan (N-linked (GlcNAc...) asparagine) is linked at asparagine 2648.

It belongs to the tenascin family. Teneurin subfamily. In terms of assembly, homodimer; disulfide-linked. Heterodimer with either TENM1 or TENM3. May also form heterodimer with TENM4. Interacts with ADGRL1 isoform 2. Derives from the membrane form by proteolytic processing. In terms of processing, derives from the plasma membrane form by proteolytic cleavage and translocates to the nucleus. Homophilic binding of the C-terminal extracellular domain stimulates its proteolytic cleavage and release in the cytoplasmic. Is subjected to rapid degradation by the proteasome pathway. In terms of tissue distribution, expressed in the brain (at protein level).

Its subcellular location is the cell membrane. It is found in the presynaptic cell membrane. The protein localises to the postsynaptic cell membrane. The protein resides in the endoplasmic reticulum. It localises to the golgi apparatus. Its subcellular location is the synapse. It is found in the cell projection. The protein localises to the dendritic spine. The protein resides in the filopodium. It localises to the growth cone. Its subcellular location is the nucleus. It is found in the PML body. Its function is as follows. Involved in neural development, regulating the establishment of proper connectivity within the nervous system. Acts as a ligand of the ADGRL1 and ADGRL3 receptors that are expressed at the surface of adjacent cells. Promotes the formation of filopodia and enlarged growth cone in neuronal cells. Mediates axon guidance and homophilic and heterophilic cell-cell adhesion. May function as a cellular signal transducer. Induces gene transcription inhibition. The protein is Teneurin-2 (Tenm2) of Rattus norvegicus (Rat).